Here is an 80-residue protein sequence, read N- to C-terminus: MATRGWFSESSAQVAQIGDIMFQGHWQWVSNALQATAAAVDNINRNAYPGVSRSGSGEGAFSSSPSNGFRPKRIRSRFNR.

His25 contacts a bacteriochlorophyll c. Residues 49–80 (PGVSRSGSGEGAFSSSPSNGFRPKRIRSRFNR) are disordered. Positions 54 to 80 (SGSGEGAFSSSPSNGFRPKRIRSRFNR) are excised as a propeptide. The span at 70-80 (RPKRIRSRFNR) shows a compositional bias: basic residues.

This sequence belongs to the BChl C/E-binding protein family.

It is found in the chlorosome. It localises to the chlorosome envelope. In terms of biological role, component of the photosynthetic apparatus. The light harvesting B740 complex binds bacteriochlorophyll c. This chain is Bacteriochlorophyll c-binding protein (cmsA), found in Chloroflexus aurantiacus (strain ATCC 29366 / DSM 635 / J-10-fl).